The chain runs to 80 residues: Conotoxin Lt6.2 (80 aa).

Residues 1-24 form the signal peptide; the sequence is MKLTRVLIIAVLFLTAYQLTTVET. The propeptide occupies 25–47; it reads YSRGKWMHRALRSTGKNPKVTRE. Intrachain disulfides connect C48/C62, C55/C66, and C61/C73.

It belongs to the conotoxin O1 superfamily. Expressed by the venom duct.

It is found in the secreted. In Conus litteratus (Lettered cone), this protein is Conotoxin Lt6.2.